The chain runs to 159 residues: NADH-quinone oxidoreductase subunit I (159 aa).

2 consecutive 4Fe-4S ferredoxin-type domains span residues 51–80 (RRYE…IEAD) and 90–119 (TRYD…EGPN). Positions 60, 63, 66, 70, 99, 102, 105, and 109 each coordinate [4Fe-4S] cluster.

Belongs to the complex I 23 kDa subunit family. NDH-1 is composed of 14 different subunits. Subunits NuoA, H, J, K, L, M, N constitute the membrane sector of the complex. [4Fe-4S] cluster serves as cofactor.

It is found in the cell inner membrane. It carries out the reaction a quinone + NADH + 5 H(+)(in) = a quinol + NAD(+) + 4 H(+)(out). In terms of biological role, NDH-1 shuttles electrons from NADH, via FMN and iron-sulfur (Fe-S) centers, to quinones in the respiratory chain. The immediate electron acceptor for the enzyme in this species is believed to be ubiquinone. Couples the redox reaction to proton translocation (for every two electrons transferred, four hydrogen ions are translocated across the cytoplasmic membrane), and thus conserves the redox energy in a proton gradient. The polypeptide is NADH-quinone oxidoreductase subunit I (Rickettsia rickettsii (strain Sheila Smith)).